The primary structure comprises 436 residues: Trigger factor (436 aa).

A PPIase FKBP-type domain is found at 163–248 (GDRVVLDFAG…VKEVAEGVLP (86 aa)).

The protein belongs to the FKBP-type PPIase family. Tig subfamily.

The protein localises to the cytoplasm. It catalyses the reaction [protein]-peptidylproline (omega=180) = [protein]-peptidylproline (omega=0). Functionally, involved in protein export. Acts as a chaperone by maintaining the newly synthesized protein in an open conformation. Functions as a peptidyl-prolyl cis-trans isomerase. This Bordetella parapertussis (strain 12822 / ATCC BAA-587 / NCTC 13253) protein is Trigger factor.